We begin with the raw amino-acid sequence, 275 residues long: Multivesicular body subunit 12A (275 aa).

Positions 5-145 (STPITGLAWI…GLVFWCRKGS (141 aa)) constitute an MABP domain. The SH3-binding motif lies at 151–156 (PTPKPR). Residues 216–267 (IDGIPFTIHPMFENTINNSSVAASDFRDLHIKTLSEIESEYNYGFVVEKTAA) enclose the UMA domain.

The protein belongs to the MVB12 family. In terms of assembly, component of the ESCRT-I complex (endosomal sorting complex required for transport I).

The protein localises to the cytoplasm. The protein resides in the endosome. It localises to the late endosome membrane. Component of the ESCRT-I complex, a regulator of vesicular trafficking process. Required for the sorting of endocytic ubiquitinated cargos into multivesicular bodies. This chain is Multivesicular body subunit 12A (mvb12a), found in Xenopus laevis (African clawed frog).